Reading from the N-terminus, the 854-residue chain is Selenocysteine insertion sequence-binding protein 2 (854 aa).

Disordered regions lie at residues 332–351, 356–394, 417–445, and 488–619; these read ADPKNVSIPSSEALSSDPSY, HIIHPTQKSKASQGSDLEQNEASRKNKKKKEKSTSKYEV, ERRDRIETPKFQSKQQPQDNFKNNVKKSQ, and ECAS…PNHT. Polar residues-rich tracts occupy residues 338 to 350 and 361 to 372; these read SIPSSEALSSDPS and TQKSKASQGSDL. Residues 380-387 carry the Nuclear localization signal motif; the sequence is KNKKKKEK. Polar residues predominate over residues 426 to 445; it reads KFQSKQQPQDNFKNNVKKSQ. Positions 536-547 are enriched in basic and acidic residues; that stretch reads ILKERQERKQRL. Residues 548-559 show a composition bias toward polar residues; that stretch reads QENAVSPAFTSD. Over residues 560 to 572 the composition is skewed to acidic residues; the sequence is DTQDGESGGDDQF. Positions 593 to 611 are enriched in basic and acidic residues; sequence VEDKSEEPPGTELQRDTEA. Residues 673-694 form an RNA-binding region; it reads LVLGLREVLKHLKLKKLKCVII. The segment at 787–812 is disordered; that stretch reads EPRPQAPPSLPTQGPSCPAEDGPPAL.

Expressed at high levels in testis.

It is found in the nucleus. It localises to the mitochondrion. Functionally, mRNA-binding protein that binds to the SECIS (selenocysteine insertion sequence) element present in the 3'-UTR of mRNAs encoding selenoproteins and facilitates the incorporation of the rare amino acid selenocysteine. Insertion of selenocysteine at UGA codons is mediated by SECISBP2 and EEFSEC: SECISBP2 (1) specifically binds the SECIS sequence once the 80S ribosome encounters an in-frame UGA codon and (2) contacts the RPS27A/eS31 of the 40S ribosome before ribosome stalling. (3) GTP-bound EEFSEC then delivers selenocysteinyl-tRNA(Sec) to the 80S ribosome and adopts a preaccommodated state conformation. (4) After GTP hydrolysis, EEFSEC dissociates from the assembly, selenocysteinyl-tRNA(Sec) accommodates, and peptide bond synthesis and selenoprotein elongation occur. In Homo sapiens (Human), this protein is Selenocysteine insertion sequence-binding protein 2.